Reading from the N-terminus, the 425-residue chain is Tyrosine--tRNA ligase (425 aa).

Y34 provides a ligand contact to L-tyrosine. The 'HIGH' region signature appears at 39–48; it reads PTADSLHVGN. 2 residues coordinate L-tyrosine: Y171 and Q175. The 'KMSKS' region motif lies at 231 to 235; that stretch reads KYGKS. K234 is a binding site for ATP. The region spanning 358-424 is the S4 RNA-binding domain; the sequence is APLVELLVHA…GKRTYTVVKI (67 aa).

The protein belongs to the class-I aminoacyl-tRNA synthetase family. TyrS type 1 subfamily. As to quaternary structure, homodimer.

Its subcellular location is the cytoplasm. The enzyme catalyses tRNA(Tyr) + L-tyrosine + ATP = L-tyrosyl-tRNA(Tyr) + AMP + diphosphate + H(+). Its function is as follows. Catalyzes the attachment of tyrosine to tRNA(Tyr) in a two-step reaction: tyrosine is first activated by ATP to form Tyr-AMP and then transferred to the acceptor end of tRNA(Tyr). The chain is Tyrosine--tRNA ligase from Opitutus terrae (strain DSM 11246 / JCM 15787 / PB90-1).